The following is a 661-amino-acid chain: Transmembrane and coiled-coil domain-containing protein STS1 (661 aa).

2 disordered regions span residues 34 to 71 and 154 to 185; these read AHHHHDDDDEEQGRTSTSSGGGGGSSSSSSNSGAGADA and VGNTIKGGDQDALPSSSGTDKSPGESSHDDQL. A compositionally biased stretch (low complexity) spans 59–69; sequence SSSSSNSGAGA. Residues 175–184 are compositionally biased toward basic and acidic residues; that stretch reads SPGESSHDDQ. A run of 4 helical transmembrane segments spans residues 306 to 326, 333 to 353, 355 to 375, and 466 to 486; these read ALLAITGGLAAPAIAAGFGAL, LVPVIGASGFAAMATAAGSVA, SVAVAASFGAAGAGLTGSKMA, and LSGLLAAFAWPATLLAATDFI.

Belongs to the TMCO4 family. In terms of assembly, interacts with PKS10/PKS2 and 4CLL9/ACOS12.

The protein resides in the endoplasmic reticulum membrane. In terms of biological role, involved in anther lipids biosynthesis and is required for tapetum degradation and pollen wall formation. Required for the formation of Ubisch bodies and microspores. Possesses lipase activity in vitro toward two synthetic substrates, p-nitrophenyl acetate (pNPA) and p-nitrophenyl butyrate (pNPB). The polypeptide is Transmembrane and coiled-coil domain-containing protein STS1 (Oryza sativa subsp. japonica (Rice)).